Consider the following 461-residue polypeptide: UDP-N-acetylmuramate--L-alanine ligase (461 aa).

ATP is bound at residue 112–118 (GTHGKTT).

This sequence belongs to the MurCDEF family.

The protein localises to the cytoplasm. It carries out the reaction UDP-N-acetyl-alpha-D-muramate + L-alanine + ATP = UDP-N-acetyl-alpha-D-muramoyl-L-alanine + ADP + phosphate + H(+). Its pathway is cell wall biogenesis; peptidoglycan biosynthesis. In terms of biological role, cell wall formation. The protein is UDP-N-acetylmuramate--L-alanine ligase of Geobacter sp. (strain M21).